The sequence spans 609 residues: Proteasome-associated ATPase (609 aa).

A disordered region spans residues 1–27; the sequence is MGSSERSEAFGTPRESDMSSGDEAELE. The stretch at 17 to 96 forms a coiled coil; it reads DMSSGDEAEL…LREEVDRLGQ (80 aa). 296-301 contacts ATP; that stretch reads GCGKTL. The docks into pockets in the proteasome alpha-ring stretch occupies residues 608-609; the sequence is YL.

Belongs to the AAA ATPase family. In terms of assembly, homohexamer. Assembles into a hexameric ring structure that caps the 20S proteasome core. Strongly interacts with the prokaryotic ubiquitin-like protein Pup through a hydrophobic interface; the interacting region of ARC lies in its N-terminal coiled-coil domain. There is one Pup binding site per ARC hexamer ring. Upon ATP-binding, the C-terminus of ARC interacts with the alpha-rings of the proteasome core, possibly by binding to the intersubunit pockets.

Its pathway is protein degradation; proteasomal Pup-dependent pathway. In terms of biological role, ATPase which is responsible for recognizing, binding, unfolding and translocation of pupylated proteins into the bacterial 20S proteasome core particle. May be essential for opening the gate of the 20S proteasome via an interaction with its C-terminus, thereby allowing substrate entry and access to the site of proteolysis. Thus, the C-termini of the proteasomal ATPase may function like a 'key in a lock' to induce gate opening and therefore regulate proteolysis. This is Proteasome-associated ATPase from Mycobacterium avium (strain 104).